A 402-amino-acid chain; its full sequence is Olfactomedin-like protein 1 (402 aa).

A signal peptide spans 1–28 (MMVALPGASASLVLFLAAFLPPLQHAQD). Asn-66 is a glycosylation site (N-linked (GlcNAc...) asparagine). Residues 73-135 (RCQTHTNEYR…EAEEEKKIRT (63 aa)) adopt a coiled-coil conformation. N-linked (GlcNAc...) asparagine glycosylation is found at Asn-138 and Asn-183. The 258-residue stretch at 140–397 (SCDNMLMAIK…QIIYKLQTKK (258 aa)) folds into the Olfactomedin-like domain. Cys-141 and Cys-324 are disulfide-bonded.

Post-translationally, highly N-glycosylated.

It localises to the secreted. The protein is Olfactomedin-like protein 1 (Olfml1) of Rattus norvegicus (Rat).